The chain runs to 908 residues: Metabotropic glutamate receptor 8 (908 aa).

Residues 1–33 form the signal peptide; sequence MVCEGKRLASCPCFFLLTAKFYWILTMMQRTHS. Topologically, residues 34-583 are extracellular; the sequence is QEYAHSIRVD…IIKLEWHSPW (550 aa). An intrachain disulfide couples cysteine 64 to cysteine 106. Asparagine 95 carries N-linked (GlcNAc...) asparagine glycosylation. L-glutamate contacts are provided by residues serine 156, 177–179, and tyrosine 227; that span reads AST. 7 disulfides stabilise this stretch: cysteine 246/cysteine 534, cysteine 369/cysteine 384, cysteine 424/cysteine 431, cysteine 516/cysteine 535, cysteine 520/cysteine 538, cysteine 541/cysteine 553, and cysteine 556/cysteine 569. Residue asparagine 298 is glycosylated (N-linked (GlcNAc...) asparagine). An L-glutamate-binding site is contributed by aspartate 309. Lysine 401 provides a ligand contact to L-glutamate. N-linked (GlcNAc...) asparagine glycosylation is found at asparagine 452 and asparagine 480. The N-linked (GlcNAc...) asparagine glycan is linked to asparagine 565. The chain crosses the membrane as a helical span at residues 584 to 608; that stretch reads AVVPVFIAILGIIATTFVIVTFVRY. Topologically, residues 609–620 are cytoplasmic; sequence NDTPIVRASGRE. The helical transmembrane segment at 621-641 threads the bilayer; sequence LSYVLLTGIFLCYSITFLMIA. Residues 642–647 are Extracellular-facing; the sequence is APDTII. The chain crosses the membrane as a helical span at residues 648–668; it reads CSFRRIFLGLGMCFSYAALLT. At 669-695 the chain is on the cytoplasmic side; the sequence is KTNRIHRIFEQGKKSVTAPKFISPASQ. A helical transmembrane segment spans residues 696 to 716; sequence LVITFSLISVQLLGVFVWFVV. Residues 717–746 are Extracellular-facing; sequence DPPHTIIDYGEQRTLDPENARGVLKCDISD. Residues 747 to 768 form a helical membrane-spanning segment; sequence LSLICSLGYSILLMVTCTVYAI. At 769 to 781 the chain is on the cytoplasmic side; the sequence is KTRGVPETFNEAK. Residues 782–803 traverse the membrane as a helical segment; that stretch reads PIGFTMYTTCIIWLAFIPIFFG. At 804-818 the chain is on the extracellular side; the sequence is TAQSAEKMYIQTTTL. The helical transmembrane segment at 819–843 threads the bilayer; it reads TVSMSLSASVSLGMLYMPKVYIIIF. The Cytoplasmic segment spans residues 844–908; sequence HPEQNVQKRK…TYISYSNHSI (65 aa). A Glycyl lysine isopeptide (Lys-Gly) (interchain with G-Cter in SUMO1) cross-link involves residue lysine 882.

It belongs to the G-protein coupled receptor 3 family. Interacts with PICK1. Prominent expression in olfactory bulb, pontine gray, lateral reticular nucleus of the thalamus, and piriform cortex. Less abundant expression incerebral cortex, hippocampus, cerebellum, and mammillary body.

The protein resides in the cell membrane. In terms of biological role, G-protein coupled receptor for glutamate. Ligand binding causes a conformation change that triggers signaling via guanine nucleotide-binding proteins (G proteins) and modulates the activity of down-stream effectors. Signaling inhibits adenylate cyclase activity. The chain is Metabotropic glutamate receptor 8 (Grm8) from Rattus norvegicus (Rat).